The following is a 177-amino-acid chain: Phycocyanin PC645 beta subunit (177 aa).

Tyrosine 18 is a binding site for mesobiliverdin. Residues lysine 28, asparagine 35, and aspartate 39 each coordinate (2R,3E)-phycocyanobilin. Positions 50, 54, and 61 each coordinate 15,16-dihydrobiliverdin. (2R,3E)-phycocyanobilin contacts are provided by asparagine 72, arginine 77, cysteine 82, arginine 84, and aspartate 85. Residue glutamine 148 participates in 15,16-dihydrobiliverdin binding. Positions 154, 156, and 158 each coordinate (2R,3E)-phycocyanobilin.

The protein belongs to the phycobiliprotein family. Heterotetramer of 2 different alpha chains and 2 identical beta chains which form 2 alpha-beta heterodimers within the heterotetramer. Post-translationally, contains two phycocyanobilin chromophores, one mesobiliverdin chromophore and one 15,16-dihydrobiliverdin chromophore with binding mediated by both the alpha and beta subunits.

The protein resides in the plastid. It localises to the chloroplast thylakoid membrane. Its function is as follows. Light-harvesting photosynthetic tetrapyrrole chromophore-protein from the phycobiliprotein complex. The protein is Phycocyanin PC645 beta subunit of Chroomonas sp. (strain CCMP270).